We begin with the raw amino-acid sequence, 283 residues long: 4-hydroxy-3-methylbut-2-enyl diphosphate reductase (283 aa).

Cysteine 12 is a binding site for [4Fe-4S] cluster. (2E)-4-hydroxy-3-methylbut-2-enyl diphosphate is bound by residues histidine 40 and histidine 73. Dimethylallyl diphosphate-binding residues include histidine 40 and histidine 73. Positions 40 and 73 each coordinate isopentenyl diphosphate. A [4Fe-4S] cluster-binding site is contributed by cysteine 95. Histidine 123 provides a ligand contact to (2E)-4-hydroxy-3-methylbut-2-enyl diphosphate. Residue histidine 123 coordinates dimethylallyl diphosphate. Residue histidine 123 coordinates isopentenyl diphosphate. Glutamate 125 (proton donor) is an active-site residue. Threonine 161 contacts (2E)-4-hydroxy-3-methylbut-2-enyl diphosphate. Cysteine 189 is a [4Fe-4S] cluster binding site. Residues serine 217, asparagine 219, and serine 261 each coordinate (2E)-4-hydroxy-3-methylbut-2-enyl diphosphate. Dimethylallyl diphosphate is bound by residues serine 217, asparagine 219, and serine 261. 3 residues coordinate isopentenyl diphosphate: serine 217, asparagine 219, and serine 261.

It belongs to the IspH family. [4Fe-4S] cluster is required as a cofactor.

The catalysed reaction is isopentenyl diphosphate + 2 oxidized [2Fe-2S]-[ferredoxin] + H2O = (2E)-4-hydroxy-3-methylbut-2-enyl diphosphate + 2 reduced [2Fe-2S]-[ferredoxin] + 2 H(+). It carries out the reaction dimethylallyl diphosphate + 2 oxidized [2Fe-2S]-[ferredoxin] + H2O = (2E)-4-hydroxy-3-methylbut-2-enyl diphosphate + 2 reduced [2Fe-2S]-[ferredoxin] + 2 H(+). Its pathway is isoprenoid biosynthesis; dimethylallyl diphosphate biosynthesis; dimethylallyl diphosphate from (2E)-4-hydroxy-3-methylbutenyl diphosphate: step 1/1. It functions in the pathway isoprenoid biosynthesis; isopentenyl diphosphate biosynthesis via DXP pathway; isopentenyl diphosphate from 1-deoxy-D-xylulose 5-phosphate: step 6/6. Functionally, catalyzes the conversion of 1-hydroxy-2-methyl-2-(E)-butenyl 4-diphosphate (HMBPP) into a mixture of isopentenyl diphosphate (IPP) and dimethylallyl diphosphate (DMAPP). Acts in the terminal step of the DOXP/MEP pathway for isoprenoid precursor biosynthesis. This Citrifermentans bemidjiense (strain ATCC BAA-1014 / DSM 16622 / JCM 12645 / Bem) (Geobacter bemidjiensis) protein is 4-hydroxy-3-methylbut-2-enyl diphosphate reductase.